A 141-amino-acid chain; its full sequence is Cystatin (141 aa).

The first 26 residues, 1 to 26, serve as a signal peptide directing secretion; sequence MVHSQLPVAAPLRLLCALLLLPSATM. The Cystatin domain occupies 29-129; the sequence is GGLSPRSVTD…CHFQVWSRPW (101 aa). The short motif at 73 to 77 is the Secondary area of contact element; that stretch reads QVVAG. Cystine bridges form between cysteine 91/cysteine 107 and cysteine 120/cysteine 140.

This sequence belongs to the cystatin family. In terms of tissue distribution, expressed at a low level by the venom gland (at protein level).

The protein resides in the secreted. Inhibits various C1 cysteine proteases including cathepsin L, papain and cathepsin B. This protein has no toxic activity and its function in the venom is unknown. It may play a role as a housekeeping or regulatory protein. This chain is Cystatin, found in Oxyuranus scutellatus scutellatus (Australian taipan).